Reading from the N-terminus, the 199-residue chain is Recombination protein RecR (199 aa).

The C4-type zinc-finger motif lies at 58-73 (CRICYNITDTEVCNIC). The 96-residue stretch at 81–176 (SLICVVSHPM…KVTRIAHGVP (96 aa)) folds into the Toprim domain.

This sequence belongs to the RecR family.

Its function is as follows. May play a role in DNA repair. It seems to be involved in an RecBC-independent recombinational process of DNA repair. It may act with RecF and RecO. This Thermoanaerobacter sp. (strain X514) protein is Recombination protein RecR.